A 513-amino-acid polypeptide reads, in one-letter code: Putative ATP-dependent RNA helicase QP509L (513 aa).

Residues 110–262 form the Helicase ATP-binding domain; it reads KKLLSPYGRF…KIIIHHLGQP (153 aa). Position 123–130 (123–130) interacts with ATP; the sequence is LNTGLGKT. The short motif at 215-218 is the DEAH box element; it reads DEAH.

It belongs to the DEAD box helicase family. DEAH subfamily.

It catalyses the reaction ATP + H2O = ADP + phosphate + H(+). This is Putative ATP-dependent RNA helicase QP509L from African swine fever virus (isolate Tick/South Africa/Pretoriuskop Pr4/1996) (ASFV).